We begin with the raw amino-acid sequence, 337 residues long: Viral cathepsin (337 aa).

Residues 1-19 (MTLLMIFTILLVASSQIEG) form the signal peptide. Positions 20–126 (HLKFDIHDAQ…DAPPDVHDEL (107 aa)) are cleaved as a propeptide — activation peptide. Intrachain disulfides connect C147/C188, C181/C221, and C276/C324. C150 is an active-site residue. A glycan (N-linked (GlcNAc...) asparagine; by host) is linked at N172. Residues H283 and N303 contribute to the active site.

Belongs to the peptidase C1 family. Synthesized as an inactive proenzyme and activated by proteolytic removal of the inhibitory propeptide.

The enzyme catalyses Endopeptidase of broad specificity, hydrolyzing substrates of both cathepsin L and cathepsin B.. In terms of biological role, cysteine protease that plays an essential role in host liquefaction to facilitate horizontal transmission of the virus. May participate in the degradation of foreign protein expressed by the baculovirus system. The protein is Viral cathepsin (VCATH) of Adoxophyes honmai (Smaller tea tortrix moth).